A 382-amino-acid polypeptide reads, in one-letter code: Acetylornithine deacetylase (382 aa).

Zn(2+) is bound at residue His-79. Residue Asp-81 is part of the active site. A Zn(2+)-binding site is contributed by Asp-111. Glu-143 is an active-site residue. Zn(2+) is bound by residues Glu-144, Glu-168, and His-354.

It belongs to the peptidase M20A family. ArgE subfamily. As to quaternary structure, homodimer. Zn(2+) is required as a cofactor. The cofactor is Co(2+). It depends on glutathione as a cofactor.

The protein resides in the cytoplasm. It catalyses the reaction N(2)-acetyl-L-ornithine + H2O = L-ornithine + acetate. It functions in the pathway amino-acid biosynthesis; L-arginine biosynthesis; L-ornithine from N(2)-acetyl-L-ornithine (linear): step 1/1. Functionally, catalyzes the hydrolysis of the amide bond of N(2)-acetylated L-amino acids. Cleaves the acetyl group from N-acetyl-L-ornithine to form L-ornithine, an intermediate in L-arginine biosynthesis pathway, and a branchpoint in the synthesis of polyamines. The polypeptide is Acetylornithine deacetylase (Pasteurella multocida (strain Pm70)).